Reading from the N-terminus, the 353-residue chain is tRNA-specific 2-thiouridylase MnmA (353 aa).

ATP-binding positions include 7 to 14 and Leu-33; that span reads GLSGGVDS. Cys-94 serves as the catalytic Nucleophile. Residues Cys-94 and Cys-193 are joined by a disulfide bond. Residue Gly-119 coordinates ATP. The interaction with tRNA stretch occupies residues 143-145; sequence KDQ. Cys-193 acts as the Cysteine persulfide intermediate in catalysis. The tract at residues 298-299 is interaction with tRNA; the sequence is RY.

This sequence belongs to the MnmA/TRMU family.

It is found in the cytoplasm. The enzyme catalyses S-sulfanyl-L-cysteinyl-[protein] + uridine(34) in tRNA + AH2 + ATP = 2-thiouridine(34) in tRNA + L-cysteinyl-[protein] + A + AMP + diphosphate + H(+). In terms of biological role, catalyzes the 2-thiolation of uridine at the wobble position (U34) of tRNA, leading to the formation of s(2)U34. The chain is tRNA-specific 2-thiouridylase MnmA from Picosynechococcus sp. (strain ATCC 27264 / PCC 7002 / PR-6) (Agmenellum quadruplicatum).